We begin with the raw amino-acid sequence, 463 residues long: MQSMTIFNIITQLVFLSKTLNGNLSVQPVFQTLDGYEYTSQSFSQNLQSESQLEIVYEWKYLDFLYSTFVQRQQSILNGDFVPKNNLPLGIDVHNNRLFVTTPRWKNGVPASLGTLPFPPKESSPAIKPYPNWEAHGNPNNPDCSKLMSVYRTAVDRCDRIWLIDSGIVNATINLNQICPPKIVVYDLKSDELIVRYNLEASHVKQDSLHSNIVVDIGEDCDDAHAIVSDVWRFGLLVYSLSKNRSWRVTNYNFYPDPFASDFNVYGLNFQWLDGVFGMSIYYNKKIMERVLYFHPMASFKEFMVPMNILLNESVWQTNTQEYAKYFIPIGDRGYNSQSSTSGVTRNGIMFFTQVHQDDIGCWDTSKPYTRAHLGKFHNMENSNLIQFPNDLKVDKEKDQNVWLISNRLPIFLYSNLDYGEVNFRILKANVNKIIRNSVCNPDNSYINTSKSAFVLIEEGQCF.

This sequence belongs to the major royal jelly protein family.

It is found in the secreted. It carries out the reaction dopaminechrome = 5,6-dihydroxyindole. Its pathway is pigment biosynthesis; melanin biosynthesis. Its function is as follows. Catalyzes the conversion of dopaminechrome to 5,6-dihydroxyindole in the eumelanin biosynthetic pathway originating from dopamine. Catalyzes tautomerization of dopaminechrome to 5,6-dihydroxyindole during eumelanin biosynthesis. Acts both dopaminechrome and N-methyl dopaminechrome but not on dopachrome or other aminochromes tested. This chain is Dopaminechrome tautomerase, found in Drosophila melanogaster (Fruit fly).